Here is a 149-residue protein sequence, read N- to C-terminus: Ribonuclease H (149 aa).

In terms of domain architecture, RNase H type-1 spans 5-146 (QRPHVVIFTD…ADELAREGLA (142 aa)). Asp14, Glu52, Asp74, and Asp138 together coordinate Mg(2+).

It belongs to the RNase H family. In terms of assembly, monomer. The cofactor is Mg(2+).

It is found in the cytoplasm. The catalysed reaction is Endonucleolytic cleavage to 5'-phosphomonoester.. Its function is as follows. Endonuclease that specifically degrades the RNA of RNA-DNA hybrids. The polypeptide is Ribonuclease H (Afipia carboxidovorans (strain ATCC 49405 / DSM 1227 / KCTC 32145 / OM5) (Oligotropha carboxidovorans)).